Reading from the N-terminus, the 71-residue chain is Cytochrome c oxidase subunit 7, mitochondrial (71 aa).

Residues 1-35 (MPGLVNAPNHVPEKQRYYQQAFKNHTRLWKIGPRS) lie on the Mitochondrial matrix side of the membrane. Residues 36–58 (GIIMTTFNIAMWGTFGASMYAMS) traverse the membrane as a helical segment. Residues 59 to 71 (RKVLGYNTWFSED) are Mitochondrial intermembrane-facing.

Belongs to the cytochrome c oxidase VIIa family. Component of the cytochrome c oxidase (complex IV, CIV), a multisubunit enzyme composed of 11 subunits. The complex is composed of a catalytic core of 3 subunits Cox1, Cox2 and Cox3, encoded in the mitochondrial DNA, and 8 supernumerary subunits Cox4, Cox5a/Cox5, Cox6, Cox7, Cox8, Cox7a/Cox9, Cox6b/Cox12 and Cox6a/Cox13, which are encoded in the nuclear genome. The complex exists as a monomer or a dimer and forms respiratory supercomplexes (SCs) in the inner mitochondrial membrane with NADH-ubiquinone oxidoreductase (complex I, CI) and ubiquinol-cytochrome c oxidoreductase (cytochrome b-c1 complex, complex III, CIII), resulting in various different assemblies (supercomplexes I(1)IV(1), I(1)III(3)IV(2), III(2)IV(1) and III(2)IV(2) as well as larger supercomplexes of compositions like I(1)III(2)IV(5-6)).

Its subcellular location is the mitochondrion inner membrane. The protein operates within energy metabolism; oxidative phosphorylation. Component of the cytochrome c oxidase, the last enzyme in the mitochondrial electron transport chain which drives oxidative phosphorylation. The respiratory chain contains 3 multisubunit complexes succinate dehydrogenase (complex II, CII), ubiquinol-cytochrome c oxidoreductase (cytochrome b-c1 complex, complex III, CIII) and cytochrome c oxidase (complex IV, CIV), that cooperate to transfer electrons derived from NADH and succinate to molecular oxygen, creating an electrochemical gradient over the inner membrane that drives transmembrane transport and the ATP synthase. Cytochrome c oxidase is the component of the respiratory chain that catalyzes the reduction of oxygen to water. Electrons originating from reduced cytochrome c in the intermembrane space (IMS) are transferred via the dinuclear copper A center (CU(A)) of Cox2 and heme A of Cox1 to the active site in Cox1, a binuclear center (BNC) formed by heme A3 and copper B (CU(B)). The BNC reduces molecular oxygen to 2 water molecules using 4 electrons from cytochrome c in the IMS and 4 protons from the mitochondrial matrix. This Neurospora crassa (strain ATCC 24698 / 74-OR23-1A / CBS 708.71 / DSM 1257 / FGSC 987) protein is Cytochrome c oxidase subunit 7, mitochondrial.